The following is a 331-amino-acid chain: 6-phosphogluconolactonase (331 aa).

The protein belongs to the cycloisomerase 2 family.

It catalyses the reaction 6-phospho-D-glucono-1,5-lactone + H2O = 6-phospho-D-gluconate + H(+). It functions in the pathway carbohydrate degradation; pentose phosphate pathway; D-ribulose 5-phosphate from D-glucose 6-phosphate (oxidative stage): step 2/3. In terms of biological role, catalyzes the hydrolysis of 6-phosphogluconolactone to 6-phosphogluconate. This Buchnera aphidicola subsp. Baizongia pistaciae (strain Bp) protein is 6-phosphogluconolactonase.